A 75-amino-acid chain; its full sequence is Peptide Ctri10036 (75 aa).

An N-terminal signal peptide occupies residues 1-22; sequence MNSKYLFVFLILNVIFIDLCQG. At lysine 41 the chain carries Lysine amide. The propeptide occupies 47-75; that stretch reads ELGSQYDYLQDFRKRELDLDDLLSKFPDY.

It belongs to the non-disulfide-bridged peptide (NDBP) superfamily. Short antimicrobial peptide (group 4) family. In terms of tissue distribution, expressed by the venom gland.

It localises to the secreted. The polypeptide is Peptide Ctri10036 (Chaerilus tricostatus (Scorpion)).